Here is a 346-residue protein sequence, read N- to C-terminus: Lipase chaperone (346 aa).

A helical transmembrane segment spans residues 10 to 30; sequence TIVFGVITSVLLLLLLIYYVF.

Belongs to the lipase chaperone family.

Its subcellular location is the cell inner membrane. In terms of biological role, may be involved in the folding of the extracellular lipase during its passage through the periplasm. The protein is Lipase chaperone (lifO) of Acinetobacter venetianus (strain ATCC 31012 / DSM 23050 / BCRC 14357 / CCUG 45561 / CIP 110063 / KCTC 2702 / LMG 19082 / RAG-1).